Reading from the N-terminus, the 575-residue chain is Proline--tRNA ligase (575 aa).

Belongs to the class-II aminoacyl-tRNA synthetase family. ProS type 1 subfamily. As to quaternary structure, homodimer.

It localises to the cytoplasm. It carries out the reaction tRNA(Pro) + L-proline + ATP = L-prolyl-tRNA(Pro) + AMP + diphosphate. In terms of biological role, catalyzes the attachment of proline to tRNA(Pro) in a two-step reaction: proline is first activated by ATP to form Pro-AMP and then transferred to the acceptor end of tRNA(Pro). As ProRS can inadvertently accommodate and process non-cognate amino acids such as alanine and cysteine, to avoid such errors it has two additional distinct editing activities against alanine. One activity is designated as 'pretransfer' editing and involves the tRNA(Pro)-independent hydrolysis of activated Ala-AMP. The other activity is designated 'posttransfer' editing and involves deacylation of mischarged Ala-tRNA(Pro). The misacylated Cys-tRNA(Pro) is not edited by ProRS. The chain is Proline--tRNA ligase from Anaeromyxobacter sp. (strain Fw109-5).